Reading from the N-terminus, the 219-residue chain is MCRTALIVAGGKGLRMGSELPKQFLPIGGKPVLMRTLEAFHRFDEKMQIILVLPREQQDFWRELCEEHGFDIKHLIADGGETRFHSVKNGLALVNGIGVVGIHDGVRPFVSQEVIARCFLEAVVRKAVIPVIDVVETVRHLTESGSETVSRNDYKLVQTPQVFDADLLKRAYEQEFTPFFTDDASVVEAMGVPVYLVEGNRENIKITTPFDLKVASALL.

The protein belongs to the IspD/TarI cytidylyltransferase family. IspD subfamily.

It carries out the reaction 2-C-methyl-D-erythritol 4-phosphate + CTP + H(+) = 4-CDP-2-C-methyl-D-erythritol + diphosphate. The protein operates within isoprenoid biosynthesis; isopentenyl diphosphate biosynthesis via DXP pathway; isopentenyl diphosphate from 1-deoxy-D-xylulose 5-phosphate: step 2/6. Functionally, catalyzes the formation of 4-diphosphocytidyl-2-C-methyl-D-erythritol from CTP and 2-C-methyl-D-erythritol 4-phosphate (MEP). In Bacteroides fragilis (strain ATCC 25285 / DSM 2151 / CCUG 4856 / JCM 11019 / LMG 10263 / NCTC 9343 / Onslow / VPI 2553 / EN-2), this protein is 2-C-methyl-D-erythritol 4-phosphate cytidylyltransferase.